The primary structure comprises 341 residues: MEPAFGEVNQLGGVFVNGRPLPNAIRLRIVELAQLGIRPCDISRQLRVSHGCVSKILARYNETGSILPGAIGGSKPRVTTPTVVKHIRTYKQRDPGIFAWEIRDRLLADGVCDKYNVPSVSSISRILRNKIGNLAQQGHYDSYKQHQPTPQPALPYNHIYSYPSPITAAAAKVPTPPGVPAIPGSVAMPRTWPSSHSVTDILGIRSITDQVSDSSPYHSPKVEEWSSLGRNNFPAAAPHAVNGLEKGALEQEAKYGQAPNGLPAVGSFVSASSMAPYPTPAQVSPYMTYSAAPSGYVAGHGWQHAGGTSLSPHNCDIPASLAFKGMQAAREGSHSVTASAL.

Positions 4-130 (AFGEVNQLGG…SSISRILRNK (127 aa)) form a DNA-binding region, paired. Positions 7–63 (EVNQLGGVFVNGRPLPNAIRLRIVELAQLGIRPCDISRQLRVSHGCVSKILARYNET) are PAI subdomain. An RED subdomain region spans residues 82-130 (TVVKHIRTYKQRDPGIFAWEIRDRLLADGVCDKYNVPSVSSISRILRNK). The interval 168 to 189 (AAAAKVPTPPGVPAIPGSVAMP) is interaction with KDM5B.

Interacts with KDM5B.

The protein localises to the nucleus. Its function is as follows. Transcription factor required for normal development of thymus, parathyroid glands, ultimobranchial bodies, teeth, skeletal elements of skull and larynx as well as distal limbs. The chain is Paired box protein Pax-9 (PAX9) from Homo sapiens (Human).